A 772-amino-acid polypeptide reads, in one-letter code: E3 ubiquitin-protein ligase UHRF1 (772 aa).

Positions 1–77 (MWIQVRTMDG…IVQLLVRQIP (77 aa)) constitute a Ubiquitin-like domain. Positions 90–111 (SDASAGCGSGQRDSDSGSGEGA) are disordered. Tudor-like regions lie at residues 129 to 205 (SLYK…LRAR) and 212 to 281 (EIKV…IEEP). Residues 291 to 299 (PQKRQNGPE) form a linker region. A PHD-type zinc finger spans residues 297–364 (GPECKHCKDN…DWYCPDCRND (68 aa)). 2 histone H3R2me0 binding regions span residues 331 to 335 (CDECD) and 351 to 353 (PQD). In terms of domain architecture, YDG spans 417–580 (GPIPGVPVGT…FLVWRYLLRR (164 aa)). The tract at residues 443–444 (HV) is required to promote base flipping. DNA is bound by residues 461 to 462 (AG) and D467. 2 required for formation of a 5-methylcytosine-binding pocket regions span residues 464–467 (YEDD) and 476–479 (YTGS). Basic and acidic residues predominate over residues 615 to 626 (SKEREKENKTED). Positions 615 to 649 (SKEREKENKTEDEPIDSPSKGKRKRNSDNEQTAAK) are disordered. The segment at 703-742 (CICCQEVVYEPVTTECHHNICKGCLDRSFKALVHSCPACR) adopts an RING-type zinc-finger fold.

The protein localises to the nucleus. The enzyme catalyses S-ubiquitinyl-[E2 ubiquitin-conjugating enzyme]-L-cysteine + [acceptor protein]-L-lysine = [E2 ubiquitin-conjugating enzyme]-L-cysteine + N(6)-ubiquitinyl-[acceptor protein]-L-lysine.. Its pathway is protein modification; protein ubiquitination. Functionally, multidomain protein that acts as a key epigenetic regulator by bridging DNA methylation and chromatin modification. Specifically recognizes and binds hemimethylated DNA at replication forks via its YDG domain and recruits dnmt1 methyltransferase to ensure faithful propagation of the DNA methylation patterns through DNA replication. In addition to its role in maintenance of DNA methylation, also plays a key role in chromatin modification: through its tudor-like regions and PHD-type zinc fingers, specifically recognizes and binds histone H3 trimethylated at 'Lys-9' (H3K9me3) and unmethylated at 'Arg-2' (H3R2me0), respectively, and recruits chromatin proteins. Enriched in pericentric heterochromatin where it recruits different chromatin modifiers required for this chromatin replication. Also localizes to euchromatic regions where it negatively regulates transcription possibly by impacting DNA methylation and histone modifications. Has E3 ubiquitin-protein ligase activity by mediating the ubiquitination of target proteins. However, it is still unclear how E3 ubiquitin-protein ligase activity is related to its role in chromatin in vivo. The polypeptide is E3 ubiquitin-protein ligase UHRF1 (uhrf1) (Xenopus laevis (African clawed frog)).